The primary structure comprises 145 residues: Large ribosomal subunit protein uL11 (145 aa).

The protein belongs to the universal ribosomal protein uL11 family. Part of the ribosomal stalk of the 50S ribosomal subunit. Interacts with L10 and the large rRNA to form the base of the stalk. L10 forms an elongated spine to which L12 dimers bind in a sequential fashion forming a multimeric L10(L12)X complex. Post-translationally, one or more lysine residues are methylated.

Forms part of the ribosomal stalk which helps the ribosome interact with GTP-bound translation factors. This chain is Large ribosomal subunit protein uL11, found in Aquifex aeolicus (strain VF5).